The chain runs to 236 residues: MNTTPDTPTPRALRELTPLEARILGVLVEKQHTVPDTYPLSLNALTAGCNQKTARAPVMNVSEDEVTTALDELKRLSLVMEGSSSRVPRFEHNMNRVLGIPSQAIALLTILLLRGPQTAAELRLNSARLHGFADISSVEAFLDELAARAQPLVVRLPRAPGARENRWMHLMCGDVNMADFASADAGGGADSVPPSEFEALKAEQKRLADEVARLNALVQRMASELGIDVDAPGDAS.

Belongs to the UPF0502 family.

This chain is UPF0502 protein Bcen2424_5610, found in Burkholderia cenocepacia (strain HI2424).